We begin with the raw amino-acid sequence, 282 residues long: Transcription factor MYB20 (282 aa).

2 HTH myb-type domains span residues 9–61 (KVGL…TNYL) and 62–116 (RPDL…KKKL). 2 consecutive DNA-binding regions (H-T-H motif) follow at residues 37–61 (WRAV…TNYL) and 89–112 (WSKI…NTHI).

In terms of tissue distribution, expressed in chalaza of mature seeds, cotyledons, rosette leaves, cauline leaves, veins of stems, mature siliques, sepals and styles. Expressed at low levels in roots.

The protein resides in the nucleus. Transcription factor that acts as a positive regulator of abscisic acid (ABA) signaling in response to salt stress. Acts as a negative regulator ABI1, ABI2 and PP2CA, which are protein phosphatases 2C acting as negative regulator of ABA signaling. Binds to the DNA specific sequence and core element 5'-ACGT-3' found in the promoters of ABI1 and PP2CA to negatively regulate their expression during ABA-dependent salt stress response. The chain is Transcription factor MYB20 from Arabidopsis thaliana (Mouse-ear cress).